The sequence spans 888 residues: 3-hydroxy-3-methylglutaryl-coenzyme A reductase (888 aa).

At 1–9 (MLSRLFRMH) the chain is on the cytoplasmic side. The chain crosses the membrane as a helical span at residues 10–39 (GLFVASHPWEVIVGTVTLTICMMSMNMFTG). Topologically, residues 40-56 (NDKICGWNYECPKFEED) are lumenal. A helical membrane pass occupies residues 57-78 (VLSSDIIILTITRCIAILYIYF). An SSD domain is found at 61 to 218 (DIIILTITRC…MTFFPACVSL (158 aa)). Residues 75–78 (YIYF) carry the INSIG-binding motif motif. The Cytoplasmic portion of the chain corresponds to 79–89 (QFQNLRQLGSK). Residue K89 forms a Glycyl lysine isopeptide (Lys-Gly) (interchain with G-Cter in ubiquitin) linkage. Residues 90–114 (YILGIAGLFTIFSSFVFSTVVIHFL) traverse the membrane as a helical segment. Residues 115–123 (DKELTGLNE) lie on the Lumenal side of the membrane. The chain crosses the membrane as a helical span at residues 124 to 149 (ALPFFLLLIDLSRASALAKFALSSNS). The Cytoplasmic portion of the chain corresponds to 150–159 (QDEVRENIAR). Residues 160–187 (GMAILGPTFTLDALVECLVIGVGTMSGV) traverse the membrane as a helical segment. The Lumenal segment spans residues 188 to 191 (RQLE). Residues 192–220 (IMCCFGCMSVLANYFVFMTFFPACVSLVL) form a helical membrane-spanning segment. Residues 221–248 (ELSRESREGRPIWQLSHFARVLEEEENK) are Cytoplasmic-facing. A Glycyl lysine isopeptide (Lys-Gly) (interchain with G-Cter in ubiquitin) cross-link involves residue K248. The chain crosses the membrane as a helical span at residues 249-275 (PNPVTQRVKMIMSLGLVLVHAHSRWIA). Residues 276–314 (DPSPQNSTADNSKVSLGLDENVSKRIEPSVSLWQFYLSK) are Lumenal-facing. N-linked (GlcNAc...) asparagine glycans are attached at residues N281 and N296. A helical membrane pass occupies residues 315–339 (MISMDIEQVITLSLALLLAVKYIFF). The Cytoplasmic segment spans residues 340–888 (EQAETESTLS…LEGACTKKAA (549 aa)). Active-site charge relay system residues include E559, K691, and D767. H866 acts as the Proton donor in catalysis. Phosphoserine; by AMPK is present on S872.

It belongs to the HMG-CoA reductase family. As to quaternary structure, homotetramer. Homodimer. Interacts (via its SSD) with INSIG1; the interaction, accelerated by sterols, leads to the recruitment of HMGCR to AMFR/gp78 for its ubiquitination by the sterol-mediated ERAD pathway. Interacts with UBIAD1. Undergoes sterol-mediated ubiquitination and ER-associated degradation (ERAD). Accumulation of sterols in the endoplasmic reticulum (ER) membrane, triggers binding of the reductase to the ER membrane protein INSIG1 or INSIG2. The INSIG1 binding leads to the recruitment of the ubiquitin ligase, AMFR/gp78, RNF139 or RNF145, initiating ubiquitination of the reductase. The ubiquitinated reductase is then extracted from the ER membrane and delivered to cytosolic 26S proteosomes by a mechanism probably mediated by the ATPase Valosin-containing protein VCP/p97. The INSIG2-binding leads to the recruitment of the ubiquitin ligase RNF139, initiating ubiquitination of the reductase. Lys-248 is the main site of ubiquitination. Ubiquitination is enhanced by the presence of a geranylgeranylated protein. In terms of processing, N-glycosylated. Deglycosylated by NGLY1 on release from the endoplasmic reticulum (ER) in a sterol-mediated manner. Post-translationally, phosphorylated. Phosphorylation at Ser-872 reduces the catalytic activity.

Its subcellular location is the endoplasmic reticulum membrane. It localises to the peroxisome membrane. The enzyme catalyses (R)-mevalonate + 2 NADP(+) + CoA = (3S)-3-hydroxy-3-methylglutaryl-CoA + 2 NADPH + 2 H(+). It functions in the pathway metabolic intermediate biosynthesis; (R)-mevalonate biosynthesis; (R)-mevalonate from acetyl-CoA: step 3/3. Its activity is regulated as follows. Regulated by a negative feedback mechanism through sterols and non-sterol metabolites derived from mevalonate. Phosphorylation at Ser-872 down-regulates the catalytic activity. Catalyzes the conversion of (3S)-hydroxy-3-methylglutaryl-CoA (HMG-CoA) to mevalonic acid, the rate-limiting step in the synthesis of cholesterol and other isoprenoids, thus plays a critical role in cellular cholesterol homeostasis. This chain is 3-hydroxy-3-methylglutaryl-coenzyme A reductase (HMGCR), found in Oryctolagus cuniculus (Rabbit).